The primary structure comprises 90 residues: MKLTILLLVAALLVLTQARTERRRVKSRKTSSTYDDEMATFCWSYWNEFQYSYPYTYVQPCLTLGKACTTNSDCCSKYCNTKMCKINWEG.

The signal sequence occupies residues 1–18 (MKLTILLLVAALLVLTQA). A propeptide spanning residues 19–29 (RTERRRVKSRK) is cleaved from the precursor. 3 disulfides stabilise this stretch: Cys61-Cys75, Cys68-Cys79, and Cys74-Cys84. Position 89 is a glutamic acid 1-amide (Glu89).

This sequence belongs to the conotoxin O2 superfamily. As to expression, expressed by the venom duct.

It localises to the secreted. Functionally, probable neurotoxin. This chain is Conotoxin Im6.2, found in Conus imperialis (Imperial cone).